The sequence spans 660 residues: Acyl-coenzyme A oxidase acox-1.3 (660 aa).

Residues 146 to 149 (YAQT), 154 to 155 (GT), and Gly188 each bind FAD. Substrate is bound by residues 282–285 (KIGY) and Arg292. Residues Arg317 and 337–340 (QQHR) each bind FAD. ATP contacts are provided by His339, Ser389, His393, and Gln401. Residue 430–431 (YE) coordinates substrate. Glu431 serves as the catalytic Proton acceptor. Glu433 is a binding site for FAD. ATP is bound by residues 524 to 527 (RASR) and Tyr572. Residues 658–660 (AKL) carry the Microbody targeting signal motif.

The protein belongs to the acyl-CoA oxidase family. Forms a heterodimer with acox-1.1; the interaction may be important for the stability of acox-1.3. The cofactor is FAD.

The protein resides in the peroxisome. It catalyses the reaction asc-C7-CoA + O2 = asc-DeltaC7-CoA + H2O2. It participates in lipid metabolism; peroxisomal fatty acid beta-oxidation. With respect to regulation, activated by ATP. ATP binding leads to a conformational change that promotes FAD cofactor binding and enzyme activity. ATP binding likely occurs during acox-1.3 folding and/or dimer formation. Functionally, involved in the first step of peroxisomal beta-oxidation by catalyzing the desaturation of fatty acid-derived side chains of ascaroside pheromones, which regulates development and behavior. Specifically, shortens ascarosides with a 7-carbon side chain (asc-C7). Does not catalyze the desaturation of fatty acids or hydroxylated fatty acids. Involved in the biosynthesis of asc-C6-MK (daumone 2) and asc-delta-C9 (daumone 3) but not asc-C7 (daumone 1); daumones are pheromones produced during unfavourable growth conditions which promote entry into the dauer stage. The sequence is that of Acyl-coenzyme A oxidase acox-1.3 from Caenorhabditis elegans.